A 212-amino-acid polypeptide reads, in one-letter code: Adenylate kinase (212 aa).

Residue 10–15 coordinates ATP; the sequence is GAGKGT. The tract at residues 30–59 is NMP; it reads STGDMFRAAMANQTEMGRLAKSYIDKGELV. Residues Thr31, Arg36, 57–59, 86–89, and Gln93 each bind AMP; these read ELV and GYPR. Positions 127-159 are LID; sequence GRIINRKTGETFHKVFNPPVDYKEEDYYQREDD. ATP contacts are provided by residues Arg128 and 137–138; that span reads TF. 2 residues coordinate AMP: Arg156 and Arg167. ATP is bound at residue Gln195.

This sequence belongs to the adenylate kinase family. In terms of assembly, monomer.

Its subcellular location is the cytoplasm. The catalysed reaction is AMP + ATP = 2 ADP. It functions in the pathway purine metabolism; AMP biosynthesis via salvage pathway; AMP from ADP: step 1/1. In terms of biological role, catalyzes the reversible transfer of the terminal phosphate group between ATP and AMP. Plays an important role in cellular energy homeostasis and in adenine nucleotide metabolism. This chain is Adenylate kinase, found in Streptococcus agalactiae serotype III (strain NEM316).